Here is a 390-residue protein sequence, read N- to C-terminus: MVNTSLLAALTAYAVAVAAAPTAPQVKGFSVNQVAVPKGVYRHPAAQLAKAYGKYHATVPTQVAAAAAATGSVTTNPTSNDEEYITQVTVGDDTLGLDFDTGSADLWVFSSQTPSSERSGHDYYTPGSSAQKIDGATWSISYGDGSSASGDVYKDKVTVGGVSYDSQAVESAEKVSSEFTQDTENDGLLGLAFSSINTVQPTPQKTFFDNVKSSLSEPIFAVALKHNAPGVYDFGYTDSSKYTGSITYTDVDNSQGFWSFTADGYSIGSDSSSDSITGIADTGTTLLLLDDSIVDAYYEQVNGASYDSSQGGYVFPSSASLPDFSVTIGDYTATVPGEYISFADVGNGQTFGGIQSNSGIGFSIFGDVFLKSQYVVFDASGPRLGFAAQA.

Positions 1–19 are cleaved as a signal peptide; sequence MVNTSLLAALTAYAVAVAA. A propeptide spans 20-67 (activation peptide); that stretch reads APTAPQVKGFSVNQVAVPKGVYRHPAAQLAKAYGKYHATVPTQVAAAA. One can recognise a Peptidase A1 domain in the interval 84–387; that stretch reads YITQVTVGDD…DASGPRLGFA (304 aa). Residues Asp-100 and Asp-281 contribute to the active site.

The protein belongs to the peptidase A1 family. As to quaternary structure, monomer.

The protein localises to the secreted. It catalyses the reaction Hydrolysis of proteins with broad specificity. Generally favors hydrophobic residues in P1 and P1', but also accepts Lys in P1, which leads to activation of trypsinogen. Does not clot milk.. Its activity is regulated as follows. Inhibited by the microbial peptide pepstatin A. Its function is as follows. Secreted aspartic endopeptidase that allows assimilation of proteinaceous substrates. The scissile peptide bond is attacked by a nucleophilic water molecule activated by two aspartic residues in the active site. Shows a broad primary substrate specificity. Favors hydrophobic residues at the P1 and P1' positions, but also accepts a lysine residue in the P1 position, leading to the activation of trypsinogen and chymotrypsinogen A. Hydrolyzes myoglobin, hemoglobin and other natural proteins. Hydrolyzes equine myoglobin between positions 'Met-1' and 'Gly-2', 'Lys-43' and 'Phe-44', and 'Leu-70' and 'Thr-71'. The protein is Aspergillopepsin-1 (pepA) of Aspergillus pseudoglaucus (Eurotium repens).